The sequence spans 258 residues: Probable F-box protein At2g29610 (258 aa).

Residues 1–25 (MVELSEIPGDPNGADPNNNPQEEDE) form a disordered region. Residues 8-20 (PGDPNGADPNNNP) show a composition bias toward low complexity. One can recognise an F-box domain in the interval 28–74 (LPILLQLPEELIERIIAHFPQCYSPSPILVCETFRQVINSDHFYYVT).

The sequence is that of Probable F-box protein At2g29610 from Arabidopsis thaliana (Mouse-ear cress).